Here is a 482-residue protein sequence, read N- to C-terminus: Pup--protein ligase (482 aa).

Glu-16 serves as a coordination point for Mg(2+). Arg-60 contacts ATP. Tyr-62 provides a ligand contact to Mg(2+). The active-site Proton acceptor is the Asp-64. Glu-70 contacts Mg(2+). Residues Thr-73 and Trp-440 each coordinate ATP.

This sequence belongs to the Pup ligase/Pup deamidase family. Pup-conjugating enzyme subfamily.

It catalyses the reaction ATP + [prokaryotic ubiquitin-like protein]-L-glutamate + [protein]-L-lysine = ADP + phosphate + N(6)-([prokaryotic ubiquitin-like protein]-gamma-L-glutamyl)-[protein]-L-lysine.. It participates in protein degradation; proteasomal Pup-dependent pathway. It functions in the pathway protein modification; protein pupylation. Its function is as follows. Catalyzes the covalent attachment of the prokaryotic ubiquitin-like protein modifier Pup to the proteasomal substrate proteins, thereby targeting them for proteasomal degradation. This tagging system is termed pupylation. The ligation reaction involves the side-chain carboxylate of the C-terminal glutamate of Pup and the side-chain amino group of a substrate lysine. The polypeptide is Pup--protein ligase (Corynebacterium glutamicum (strain R)).